The chain runs to 137 residues: Nucleoside diphosphate kinase (137 aa).

ATP-binding residues include lysine 9, phenylalanine 57, arginine 85, threonine 91, arginine 102, and asparagine 112. Catalysis depends on histidine 115, which acts as the Pros-phosphohistidine intermediate.

Belongs to the NDK family. Homotetramer. Mg(2+) serves as cofactor.

The protein resides in the cytoplasm. It catalyses the reaction a 2'-deoxyribonucleoside 5'-diphosphate + ATP = a 2'-deoxyribonucleoside 5'-triphosphate + ADP. It carries out the reaction a ribonucleoside 5'-diphosphate + ATP = a ribonucleoside 5'-triphosphate + ADP. Major role in the synthesis of nucleoside triphosphates other than ATP. The ATP gamma phosphate is transferred to the NDP beta phosphate via a ping-pong mechanism, using a phosphorylated active-site intermediate. In Sulfurimonas denitrificans (strain ATCC 33889 / DSM 1251) (Thiomicrospira denitrificans (strain ATCC 33889 / DSM 1251)), this protein is Nucleoside diphosphate kinase.